Reading from the N-terminus, the 620-residue chain is Endoglucanase 6 (620 aa).

The first 22 residues, 1-22 (MEKFAPVAALLLLLLCFPVAFS), serve as a signal peptide directing secretion. Catalysis depends on aspartate 78, which acts as the Nucleophile. Active-site residues include histidine 411, aspartate 463, and glutamate 472. Asparagine 554 and asparagine 564 each carry an N-linked (GlcNAc...) asparagine glycan.

The protein belongs to the glycosyl hydrolase 9 (cellulase E) family.

It is found in the secreted. It catalyses the reaction Endohydrolysis of (1-&gt;4)-beta-D-glucosidic linkages in cellulose, lichenin and cereal beta-D-glucans.. This chain is Endoglucanase 6, found in Arabidopsis thaliana (Mouse-ear cress).